The primary structure comprises 325 residues: Probable cell division protein WhiA (325 aa).

A DNA-binding region (H-T-H motif) is located at residues 273 to 306; the sequence is SLEELGALADPPLTKDAVAGRIRRLLALADKRAN.

The protein belongs to the WhiA family.

Functionally, involved in cell division and chromosome segregation. This chain is Probable cell division protein WhiA, found in Parafrankia sp. (strain EAN1pec).